We begin with the raw amino-acid sequence, 190 residues long: GTP cyclohydrolase 1 (190 aa).

Residues C80, H83, and C151 each coordinate Zn(2+).

Belongs to the GTP cyclohydrolase I family. Toroid-shaped homodecamer, composed of two pentamers of five dimers.

The enzyme catalyses GTP + H2O = 7,8-dihydroneopterin 3'-triphosphate + formate + H(+). The protein operates within cofactor biosynthesis; 7,8-dihydroneopterin triphosphate biosynthesis; 7,8-dihydroneopterin triphosphate from GTP: step 1/1. The polypeptide is GTP cyclohydrolase 1 (Rickettsia typhi (strain ATCC VR-144 / Wilmington)).